A 213-amino-acid chain; its full sequence is Maleylacetoacetate isomerase (213 aa).

The region spanning 3 to 84 (NETVLYDYWR…YLAETRDGTG (82 aa)) is the GST N-terminal domain. The GST C-terminal domain maps to 89–213 (HPIDRQRVRA…QRAHPDRAKP (125 aa)).

It belongs to the GST superfamily. Zeta family.

It catalyses the reaction 4-maleylacetoacetate = 4-fumarylacetoacetate. It functions in the pathway amino-acid degradation; L-phenylalanine degradation; acetoacetate and fumarate from L-phenylalanine: step 5/6. The sequence is that of Maleylacetoacetate isomerase (maiA) from Rhizobium meliloti (strain 1021) (Ensifer meliloti).